The following is a 150-amino-acid chain: Ribonuclease K6 (150 aa).

An N-terminal signal peptide occupies residues 1–23 (MVLCFPLLLLLLVLWGPVCLLHA). His-38 serves as the catalytic Proton acceptor. 4 cysteine pairs are disulfide-bonded: Cys-46/Cys-104, Cys-60/Cys-114, Cys-78/Cys-129, and Cys-85/Cys-92. The N-linked (GlcNAc...) asparagine glycan is linked to Asn-55. Residues 61-65 (KHQNT) and Lys-86 contribute to the substrate site. An N-linked (GlcNAc...) asparagine glycan is attached at Asn-100. Residue Arg-105 participates in substrate binding. The active-site Proton donor is the His-145.

This sequence belongs to the pancreatic ribonuclease family. As to quaternary structure, interacts (via N-terminus) with bacterial lipopolysaccharide (LPS).

The protein resides in the secreted. The protein localises to the lysosome. Its subcellular location is the cytoplasmic granule. Functionally, ribonuclease which shows a preference for the pyrimidines uridine and cytosine. Has potent antibacterial activity against a range of Gram-positive and Gram-negative bacteria, including P.aeruginosa, A.baumanii, M.luteus, S.aureus, E.faecalis, E.faecium, S.saprophyticus and E.coli. Causes loss of bacterial membrane integrity, and also promotes agglutination of Gram-negative bacteria. Probably contributes to urinary tract sterility. Bactericidal activity is independent of RNase activity. This Macaca mulatta (Rhesus macaque) protein is Ribonuclease K6 (RNASE6).